The sequence spans 283 residues: Elongation factor Ts (283 aa).

Residues 79-82 form an involved in Mg(2+) ion dislocation from EF-Tu region; the sequence is TDFV.

This sequence belongs to the EF-Ts family.

The protein resides in the cytoplasm. Its function is as follows. Associates with the EF-Tu.GDP complex and induces the exchange of GDP to GTP. It remains bound to the aminoacyl-tRNA.EF-Tu.GTP complex up to the GTP hydrolysis stage on the ribosome. In Shewanella denitrificans (strain OS217 / ATCC BAA-1090 / DSM 15013), this protein is Elongation factor Ts.